Reading from the N-terminus, the 768-residue chain is Glucoamylase S2 (768 aa).

The N-terminal stretch at 1–21 (MQRPFLLAYLVLSLLFNSALG) is a signal peptide. Disordered stretches follow at residues 29-83 (RGSS…ETTI) and 125-149 (TTTVPCSTSPSETASESTTTSPTTP). A compositionally biased stretch (low complexity) spans 30 to 48 (GSSSSNITSSGPSSTPFSS). Residue asparagine 35 is glycosylated (N-linked (GlcNAc...) asparagine). Positions 49–66 (ATESFSTGTTVTPSSSKY) are enriched in polar residues. 2 stretches are compositionally biased toward low complexity: residues 71-83 (TETSVSSTTETTI) and 131-149 (STSPSETASESTTTSPTTP). Residues asparagine 309, asparagine 323, asparagine 415, asparagine 424, and asparagine 435 are each glycosylated (N-linked (GlcNAc...) asparagine). A h subunit region spans residues 349–692 (VSIERIFENI…ASTTLYQLIY (344 aa)). Tryptophan 456 contacts substrate. The N-linked (GlcNAc...) asparagine glycan is linked to asparagine 514. Aspartate 519 (proton acceptor) is an active-site residue. Residue glutamate 522 is the Proton donor of the active site. N-linked (GlcNAc...) asparagine glycosylation is found at asparagine 547, asparagine 646, asparagine 651, asparagine 721, and asparagine 742. The interval 693 to 768 (RHISEQHDLV…LKATWEQTGN (76 aa)) is y subunit.

Belongs to the glycosyl hydrolase 15 family.

It carries out the reaction Hydrolysis of terminal (1-&gt;4)-linked alpha-D-glucose residues successively from non-reducing ends of the chains with release of beta-D-glucose.. The sequence is that of Glucoamylase S2 (STA2) from Saccharomyces cerevisiae (Baker's yeast).